The following is an 874-amino-acid chain: Alanine--tRNA ligase (874 aa).

The Zn(2+) site is built by His-563, His-567, Cys-665, and His-669.

Belongs to the class-II aminoacyl-tRNA synthetase family. Zn(2+) serves as cofactor.

The protein resides in the cytoplasm. It catalyses the reaction tRNA(Ala) + L-alanine + ATP = L-alanyl-tRNA(Ala) + AMP + diphosphate. Catalyzes the attachment of alanine to tRNA(Ala) in a two-step reaction: alanine is first activated by ATP to form Ala-AMP and then transferred to the acceptor end of tRNA(Ala). Also edits incorrectly charged Ser-tRNA(Ala) and Gly-tRNA(Ala) via its editing domain. The chain is Alanine--tRNA ligase from Haemophilus ducreyi (strain 35000HP / ATCC 700724).